Consider the following 227-residue polypeptide: Endo-1,4-beta-xylanase 1 (227 aa).

An N-terminal signal peptide occupies residues 1-19 (MVSLKSVLAAATAVSSAIA). Positions 37-225 (QVTPNAEGWH…SSGESDIYVQ (189 aa)) constitute a GH11 domain. E121 acts as the Nucleophile in catalysis. The active-site Proton donor is E212.

Belongs to the glycosyl hydrolase 11 (cellulase G) family.

The enzyme catalyses Endohydrolysis of (1-&gt;4)-beta-D-xylosidic linkages in xylans.. Its pathway is glycan degradation; xylan degradation. The polypeptide is Endo-1,4-beta-xylanase 1 (Humicola insolens (Soft-rot fungus)).